The chain runs to 367 residues: Histidinol-phosphate aminotransferase 1 (367 aa).

Lys-229 carries the post-translational modification N6-(pyridoxal phosphate)lysine.

Belongs to the class-II pyridoxal-phosphate-dependent aminotransferase family. Histidinol-phosphate aminotransferase subfamily. In terms of assembly, homodimer. It depends on pyridoxal 5'-phosphate as a cofactor.

The catalysed reaction is L-histidinol phosphate + 2-oxoglutarate = 3-(imidazol-4-yl)-2-oxopropyl phosphate + L-glutamate. It functions in the pathway amino-acid biosynthesis; L-histidine biosynthesis; L-histidine from 5-phospho-alpha-D-ribose 1-diphosphate: step 7/9. This chain is Histidinol-phosphate aminotransferase 1, found in Idiomarina loihiensis (strain ATCC BAA-735 / DSM 15497 / L2-TR).